The sequence spans 195 residues: Group XIIB secretory phospholipase A2-like protein (195 aa).

The first 19 residues, 1–19, serve as a signal peptide directing secretion; the sequence is MKLLCGFFLLWLGLVGNLA. Ca(2+)-binding residues include Ser-89, Tyr-91, Leu-93, and Asp-116.

The protein belongs to the phospholipase A2 family. It depends on Ca(2+) as a cofactor.

It localises to the secreted. In terms of biological role, not known; does not seem to have catalytic activity. This Mus musculus (Mouse) protein is Group XIIB secretory phospholipase A2-like protein (Pla2g12b).